We begin with the raw amino-acid sequence, 349 residues long: uncharacterized protein (349 aa).

The signal sequence occupies residues 1–26 (MQSHAGGSRAPLGLLLICLCLPGLFA). Disordered stretches follow at residues 30 to 113 (GAPE…QGMA) and 322 to 349 (YPAG…GITP). Residues 39-52 (HSGQPSFTSLLNPG) show a composition bias toward polar residues. Positions 90–101 (NGPPFWGPPPME) are enriched in pro residues.

In terms of assembly, binds to numerous extracellular matrix proteins.

It is found in the secreted. The protein localises to the extracellular space. The protein resides in the extracellular matrix. This is an uncharacterized protein from Mus musculus (Mouse).